The sequence spans 84 residues: Putative membrane protein insertion efficiency factor (84 aa).

It belongs to the UPF0161 family.

It localises to the cell inner membrane. Could be involved in insertion of integral membrane proteins into the membrane. This chain is Putative membrane protein insertion efficiency factor, found in Shewanella sp. (strain ANA-3).